The following is a 388-amino-acid chain: MRDVCLPFLARENLSNPESGLILLEDTERSHSSLRIGQNAPDGVWPLGNSPILPVVTPWPLCQDHAAPSIWTLLDAYWRGYQDQNLEPPKWLWLCLEDPSGNKYTGTQFLVPPLGLVKIRLYQNLTVVYICQSIDPWENENPTGGRRDPTRRYGCRIACDPVYCVKIVWEGNLWDKKDQPCWLIRLKEGHNHGAKELSQRDIKILGESRPYPYGLIGQCPKLQYAIQVKMRVDKAPLTAKVLAVKALHFHRWNICQRENPGIGEGYFPSGYTQALKAYGPQHGSAEQRVWLISTKIVGPQEKDYWRDAYRWGYFPLVPNKHHPGWTRHLTKFKISRFATPADIQKIVDELLPRGASIVTADGNRYESTRKVHLVNEGTLEEYQAKIRK.

Belongs to the spumavirus protein Bel-2 family.

The protein is Protein Bel-2 (bel2) of Simian foamy virus type 3 (strain LK3) (SFVagm).